Here is a 141-residue protein sequence, read N- to C-terminus: Ribonuclease P protein component (141 aa).

Disordered stretches follow at residues 37–56 and 114–141; these read RTEE…VGFT and RRIT…VNGK. A compositionally biased stretch (basic and acidic residues) spans 114–123; sequence RRITAKGERR.

It belongs to the RnpA family. In terms of assembly, consists of a catalytic RNA component (M1 or rnpB) and a protein subunit.

The enzyme catalyses Endonucleolytic cleavage of RNA, removing 5'-extranucleotides from tRNA precursor.. Functionally, RNaseP catalyzes the removal of the 5'-leader sequence from pre-tRNA to produce the mature 5'-terminus. It can also cleave other RNA substrates such as 4.5S RNA. The protein component plays an auxiliary but essential role in vivo by binding to the 5'-leader sequence and broadening the substrate specificity of the ribozyme. In Brucella suis biovar 1 (strain 1330), this protein is Ribonuclease P protein component.